The chain runs to 87 residues: UPF0250 protein ECA1299 (87 aa).

It belongs to the UPF0250 family.

This chain is UPF0250 protein ECA1299, found in Pectobacterium atrosepticum (strain SCRI 1043 / ATCC BAA-672) (Erwinia carotovora subsp. atroseptica).